A 468-amino-acid chain; its full sequence is IQ domain-containing protein C (468 aa).

The IQ domain maps to 6-35 (LVLKVTALQACIRGFLVRRQFQSLRGEYEA). Disordered stretches follow at residues 113–157 (NASS…GPGL), 202–245 (EVNQ…PGEP), and 329–468 (SHKE…GPAG). The segment covering 139 to 150 (QETRDVSRKNDP) has biased composition (basic and acidic residues). Residues 415–426 (SSIERSPSESSH) show a composition bias toward basic and acidic residues.

This is IQ domain-containing protein C (IQCC) from Bos taurus (Bovine).